Here is a 203-residue protein sequence, read N- to C-terminus: Glycerol-3-phosphate acyltransferase (203 aa).

Over 1-3 the chain is Periplasmic; sequence MSA. A helical transmembrane segment spans residues 4 to 24; that stretch reads IAPGMILFAYLCGSISSAILV. Topologically, residues 25–52 are cytoplasmic; sequence CRIAGLPDPRESGSGNPGATNVLRIGGK. A helical transmembrane segment spans residues 53–73; sequence GAAVAVLIFDILKGMLPVWGA. Over 74-80 the chain is Periplasmic; that stretch reads YALGVTP. A helical membrane pass occupies residues 81–101; the sequence is FWLGLIAIAACLGHIWPVFFG. Residues 102-111 lie on the Cytoplasmic side of the membrane; it reads FKGGKGVATA. A helical transmembrane segment spans residues 112-132; that stretch reads FGAIAPIGWDLTGVMAGTWLL. The Periplasmic segment spans residues 133–137; that stretch reads TVLLS. Residues 138–158 form a helical membrane-spanning segment; the sequence is GYSSLGAIVSALIAPFYVWWF. Residues 159 to 203 lie on the Cytoplasmic side of the membrane; sequence KPQFTFPVSMLSCLILLRHHDNIQRLWRRQETKIWTKLKKKRQKD.

This sequence belongs to the PlsY family. Probably interacts with PlsX.

It localises to the cell inner membrane. The catalysed reaction is sn-glycerol 3-phosphate + an acyl-CoA = a 1-acyl-sn-glycero-3-phosphate + CoA. The enzyme catalyses a fatty acyl-[ACP] + sn-glycerol 3-phosphate = a 1-acyl-sn-glycero-3-phosphate + holo-[ACP]. It participates in lipid metabolism; phospholipid metabolism. In terms of biological role, catalyzes the transfer of an acyl group from acyl-ACP to glycerol-3-phosphate (G3P) to form lysophosphatidic acid (LPA). This enzyme can also utilize acyl-CoA as fatty acyl donor, but not acyl-PO(4). The sequence is that of Glycerol-3-phosphate acyltransferase from Salmonella agona (strain SL483).